Consider the following 134-residue polypeptide: Large ribosomal subunit protein uL22 (134 aa).

Belongs to the universal ribosomal protein uL22 family. Part of the 50S ribosomal subunit.

Functionally, this protein binds specifically to 23S rRNA; its binding is stimulated by other ribosomal proteins, e.g. L4, L17, and L20. It is important during the early stages of 50S assembly. It makes multiple contacts with different domains of the 23S rRNA in the assembled 50S subunit and ribosome. In terms of biological role, the globular domain of the protein is located near the polypeptide exit tunnel on the outside of the subunit, while an extended beta-hairpin is found that lines the wall of the exit tunnel in the center of the 70S ribosome. The protein is Large ribosomal subunit protein uL22 of Karelsulcia muelleri (strain GWSS) (Sulcia muelleri).